The following is a 545-amino-acid chain: Glucose-6-phosphate isomerase (545 aa).

Glutamate 351 acts as the Proton donor in catalysis. Active-site residues include histidine 382 and lysine 510.

This sequence belongs to the GPI family.

Its subcellular location is the cytoplasm. The enzyme catalyses alpha-D-glucose 6-phosphate = beta-D-fructose 6-phosphate. It functions in the pathway carbohydrate biosynthesis; gluconeogenesis. The protein operates within carbohydrate degradation; glycolysis; D-glyceraldehyde 3-phosphate and glycerone phosphate from D-glucose: step 2/4. Its function is as follows. Catalyzes the reversible isomerization of glucose-6-phosphate to fructose-6-phosphate. In Shewanella pealeana (strain ATCC 700345 / ANG-SQ1), this protein is Glucose-6-phosphate isomerase.